The chain runs to 134 residues: Profilin-3 (134 aa).

C13 and C118 are joined by a disulfide. The short motif at 84–100 is the Involved in PIP2 interaction element; the sequence is AVIRGKKGSGGITIKKT. Phosphothreonine is present on T114.

This sequence belongs to the profilin family. In terms of assembly, occurs in many kinds of cells as a complex with monomeric actin in a 1:1 ratio. In terms of processing, phosphorylated by MAP kinases.

It is found in the cytoplasm. Its subcellular location is the cytoskeleton. Its function is as follows. Binds to actin and affects the structure of the cytoskeleton. At high concentrations, profilin prevents the polymerization of actin, whereas it enhances it at low concentrations. The sequence is that of Profilin-3 from Olea europaea (Common olive).